Reading from the N-terminus, the 241-residue chain is Copper transport protein CTR3 (241 aa).

Over 1–41 (MNMGGSSSTAAKKATCKISMLWNWYTIDTCFIARSWRNDTK) the chain is Lumenal. Residues 42 to 62 (GKFAGSCIGCFALVVVAQWLT) traverse the membrane as a helical segment. Over 63–159 (RFSRQFDVEL…SCCTLITPVD (97 aa)) the chain is Cytoplasmic. Residues 160 to 180 (LYPTFLDHMIRVTIFVLQWGL) form a helical membrane-spanning segment. Residues 181–182 (SY) lie on the Lumenal side of the membrane. Residues 183–203 (IIMLLFMYYNGYIIISCLIGA) traverse the membrane as a helical segment. Residues 204 to 241 (IVGRFIFCYEPLGSLGANGSAQGTVSYDKESDDRKCCL) lie on the Cytoplasmic side of the membrane.

The protein belongs to the copper transporter (Ctr) (TC 1.A.56) family. SLC31A subfamily.

It localises to the cytoplasmic vesicle membrane. In terms of biological role, required for high affinity copper (probably reduced Cu I) transport into the cell. The polypeptide is Copper transport protein CTR3 (CTR3) (Saccharomyces cerevisiae (strain ATCC 204508 / S288c) (Baker's yeast)).